We begin with the raw amino-acid sequence, 131 residues long: Large ribosomal subunit protein bL17 (131 aa).

The protein belongs to the bacterial ribosomal protein bL17 family. As to quaternary structure, part of the 50S ribosomal subunit. Contacts protein L32.

This chain is Large ribosomal subunit protein bL17, found in Methylobacillus flagellatus (strain ATCC 51484 / DSM 6875 / VKM B-1610 / KT).